A 338-amino-acid polypeptide reads, in one-letter code: uncharacterized protein (338 aa).

Residues 144 to 321 form the TNase-like domain; it reads HTLPVDVKAV…RAARVGLWAS (178 aa). Residues R228, E236, and R270 contribute to the active site.

This is an uncharacterized protein from Capnoides sempervirens (Rock-harlequin).